Here is a 264-residue protein sequence, read N- to C-terminus: 5'-nucleotidase SurE (264 aa).

The a divalent metal cation site is built by Asp-12, Asp-13, Ser-43, and Asn-98.

This sequence belongs to the SurE nucleotidase family. Requires a divalent metal cation as cofactor.

Its subcellular location is the cytoplasm. The catalysed reaction is a ribonucleoside 5'-phosphate + H2O = a ribonucleoside + phosphate. Its function is as follows. Nucleotidase that shows phosphatase activity on nucleoside 5'-monophosphates. The protein is 5'-nucleotidase SurE of Sulfurovum sp. (strain NBC37-1).